The primary structure comprises 313 residues: Ribosomal RNA small subunit methyltransferase H (313 aa).

Residues 33–35 (GGH), Asp53, Phe80, Asp101, and Gln108 contribute to the S-adenosyl-L-methionine site. The segment at 282–313 (LVHNKPLTPSEAEIEQNPRARSAKLRVAQKLA) is disordered.

This sequence belongs to the methyltransferase superfamily. RsmH family.

The protein localises to the cytoplasm. The enzyme catalyses cytidine(1402) in 16S rRNA + S-adenosyl-L-methionine = N(4)-methylcytidine(1402) in 16S rRNA + S-adenosyl-L-homocysteine + H(+). Its function is as follows. Specifically methylates the N4 position of cytidine in position 1402 (C1402) of 16S rRNA. This chain is Ribosomal RNA small subunit methyltransferase H, found in Magnetococcus marinus (strain ATCC BAA-1437 / JCM 17883 / MC-1).